The following is a 111-amino-acid chain: BET1-like protein (111 aa).

Residues 1-86 (MADWTRAQSS…VARSGRDTRK (86 aa)) are Cytoplasmic-facing. Ser-9 and Ser-37 each carry phosphoserine. A t-SNARE coiled-coil homology domain is found at 15–77 (EIVDRENKRM…TGSVKRFSTV (63 aa)). The helical; Anchor for type IV membrane protein transmembrane segment at 87-107 (LLCGMAVVLIVAFFILSYLFS) threads the bilayer. At 108–111 (RTRT) the chain is on the vesicular side.

In terms of assembly, component of a SNARE complex consisting of STX5, YKT6, GOSR1 and BET1L. Interacts with STX5. As to expression, widely expressed. Highest levels in heart, liver, skeletal muscle and kidney.

The protein resides in the golgi apparatus membrane. It is found in the golgi apparatus. It localises to the trans-Golgi network membrane. Vesicle SNARE required for targeting and fusion of retrograde transport vesicles with the Golgi complex. Required for the integrity of the Golgi complex. The chain is BET1-like protein from Rattus norvegicus (Rat).